The primary structure comprises 63 residues: Translational regulator CsrA (63 aa).

It belongs to the CsrA/RsmA family. In terms of assembly, homodimer; the beta-strands of each monomer intercalate to form a hydrophobic core, while the alpha-helices form wings that extend away from the core.

It localises to the cytoplasm. A key translational regulator that binds mRNA to regulate translation initiation and/or mRNA stability. Mediates global changes in gene expression, shifting from rapid growth to stress survival by linking envelope stress, the stringent response and the catabolite repression systems. Usually binds in the 5'-UTR; binding at or near the Shine-Dalgarno sequence prevents ribosome-binding, repressing translation, binding elsewhere in the 5'-UTR can activate translation and/or stabilize the mRNA. Its function is antagonized by small RNA(s). In Alteromonas mediterranea (strain DSM 17117 / CIP 110805 / LMG 28347 / Deep ecotype), this protein is Translational regulator CsrA.